The sequence spans 115 residues: Androgen-binding protein homolog (115 aa).

An N-terminal signal peptide occupies residues 1 to 23; that stretch reads MKGTLLLLALLVTGELGFQTTEA.

This sequence belongs to the secretoglobin family.

It is found in the secreted. The sequence is that of Androgen-binding protein homolog from Mesocricetus auratus (Golden hamster).